Here is a 559-residue protein sequence, read N- to C-terminus: ADP,ATP carrier protein 1 (559 aa).

The segment covering 1–10 (MNEVENNNHS) has biased composition (polar residues). The segment at 1 to 22 (MNEVENNNHSFPREDIPTEDEI) is disordered. Residue Asn8 is glycosylated (N-linked (GlcNAc...) asparagine). Transmembrane regions (helical) follow at residues 46–66 (FALL…MRIL), 79–99 (TILF…VFLI), 111–131 (IFSI…AVFL), and 174–194 (IVFI…FLSF). N-linked (GlcNAc...) asparagine glycosylation is present at Asn196. Helical transmembrane passes span 210 to 230 (PLII…GAFF) and 242 to 262 (QVLL…VIFL). Residue Asn290 is glycosylated (N-linked (GlcNAc...) asparagine). The next 3 helical transmembrane spans lie at 305–325 (LLLA…MVES), 354–373 (QYMT…SSYV), and 377–397 (GFLL…VLFL). An N-linked (GlcNAc...) asparagine glycan is attached at Asn403. 3 consecutive transmembrane segments (helical) span residues 425–447 (YVLE…YSAF), 473–493 (IFGK…FEAL), and 503–523 (PITA…IIYL).

Belongs to the ADP/ATP translocase tlc family.

Its subcellular location is the cell membrane. In terms of biological role, ATP transporter involved in the uptake of ATP from the host cell cytoplasm. Provides the microsporidian cell with host ATP in exchange for ADP. This is an obligate exchange system. This energy acquiring activity is an important component of microsporidian parasitism. This is ADP,ATP carrier protein 1 (NTT1) from Encephalitozoon cuniculi (strain GB-M1) (Microsporidian parasite).